Consider the following 130-residue polypeptide: uncharacterized protein (130 aa).

Residues 1–19 (MKVLGNILWWAFVGFMAYA) form the signal peptide.

This is an uncharacterized protein from Escherichia coli (strain K12).